Consider the following 91-residue polypeptide: Large ribosomal subunit protein uL22 (91 aa).

The protein belongs to the universal ribosomal protein uL22 family. As to quaternary structure, part of the 50S ribosomal subunit.

Functionally, this protein binds specifically to 23S rRNA; its binding is stimulated by other ribosomal proteins, e.g. L4, L17, and L20. It is important during the early stages of 50S assembly. It makes multiple contacts with different domains of the 23S rRNA in the assembled 50S subunit and ribosome. The globular domain of the protein is located near the polypeptide exit tunnel on the outside of the subunit, while an extended beta-hairpin is found that lines the wall of the exit tunnel in the center of the 70S ribosome. The sequence is that of Large ribosomal subunit protein uL22 (rplV) from Loofah witches'-broom phytoplasma.